A 115-amino-acid chain; its full sequence is UPF0102 protein Kole_1919 (115 aa).

It belongs to the UPF0102 family.

This chain is UPF0102 protein Kole_1919, found in Kosmotoga olearia (strain ATCC BAA-1733 / DSM 21960 / TBF 19.5.1).